Reading from the N-terminus, the 114-residue chain is Large ribosomal subunit protein bL21 (114 aa).

Belongs to the bacterial ribosomal protein bL21 family. Part of the 50S ribosomal subunit. Contacts protein L20.

Its function is as follows. This protein binds to 23S rRNA in the presence of protein L20. The sequence is that of Large ribosomal subunit protein bL21 from Protochlamydia amoebophila (strain UWE25).